The primary structure comprises 144 residues: Large ribosomal subunit protein uL15 (144 aa).

The tract at residues 20–49 (GRGIGSGLGKTGGRGHKGQKSRSGGFHKVG) is disordered. A compositionally biased stretch (gly residues) spans 21–31 (RGIGSGLGKTG).

This sequence belongs to the universal ribosomal protein uL15 family. Part of the 50S ribosomal subunit.

Its function is as follows. Binds to the 23S rRNA. In Neisseria meningitidis serogroup C (strain 053442), this protein is Large ribosomal subunit protein uL15.